Reading from the N-terminus, the 151-residue chain is ALK and LTK ligand 2 (151 aa).

The signal sequence occupies residues 1 to 25; it reads MRVSGRPMLLALLLLLSTVGDPGHA. 2 disulfides stabilise this stretch: cysteine 112-cysteine 148 and cysteine 126-cysteine 135.

It belongs to the ALKAL family. In terms of assembly, homodimer.

It localises to the secreted. Its subcellular location is the cell membrane. Its function is as follows. Cytokine that acts as a physiological ligand for receptor tyrosine kinases LTK and ALK, leading to their activation. Cytokine-binding is sufficient to activate LTK. In contrast, ALKAL2-driven activation of ALK is coupled with heparin-binding to ALK. Stimulation of ALK signaling is involved in neural development and regulation of energy expenditure. The sequence is that of ALK and LTK ligand 2 from Rattus norvegicus (Rat).